Consider the following 133-residue polypeptide: MAVNDPIADMLTRIRNASEARHATTVVPASRLARSIAEVLKREGFIADFEESGEGVQRHLVLSLKYKGKNQQPIIKALKRVSKPGLRVYSNRRDLPRVLGGIGIAIISTSQGIMTDRDARRQGVGGEVLCYVW.

The protein belongs to the universal ribosomal protein uS8 family. In terms of assembly, part of the 30S ribosomal subunit. Contacts proteins S5 and S12.

Its function is as follows. One of the primary rRNA binding proteins, it binds directly to 16S rRNA central domain where it helps coordinate assembly of the platform of the 30S subunit. This chain is Small ribosomal subunit protein uS8, found in Synechococcus elongatus (strain ATCC 33912 / PCC 7942 / FACHB-805) (Anacystis nidulans R2).